Here is a 70-residue protein sequence, read N- to C-terminus: Delta-hexatoxin-Mg1b (70 aa).

Residues 1–26 form the signal peptide; the sequence is MKILEKALLENDSAAEEESRNLRTKR. Disulfide bonds link cysteine 27–cysteine 41, cysteine 34–cysteine 46, cysteine 40–cysteine 57, and cysteine 42–cysteine 68.

As to expression, expressed by the venom gland.

It localises to the secreted. Its function is as follows. Inhibits tetrodotoxin-sensitive sodium channels (Nav). Intracranial injection into mice causes strong convulsions and death. Intrathorax injection into crickets causes paralysis prolonged for 2 minutes, followed by recovery. This chain is Delta-hexatoxin-Mg1b, found in Macrothele gigas (Japanese funnel web spider).